The primary structure comprises 259 residues: Hydroxyacylglutathione hydrolase (259 aa).

Residues His-56, His-58, Asp-60, His-61, His-112, Asp-133, and His-171 each contribute to the Zn(2+) site.

It belongs to the metallo-beta-lactamase superfamily. Glyoxalase II family. In terms of assembly, monomer. Zn(2+) is required as a cofactor.

The catalysed reaction is an S-(2-hydroxyacyl)glutathione + H2O = a 2-hydroxy carboxylate + glutathione + H(+). It participates in secondary metabolite metabolism; methylglyoxal degradation; (R)-lactate from methylglyoxal: step 2/2. Its function is as follows. Thiolesterase that catalyzes the hydrolysis of S-D-lactoyl-glutathione to form glutathione and D-lactic acid. This chain is Hydroxyacylglutathione hydrolase, found in Pseudomonas putida (strain GB-1).